The primary structure comprises 198 residues: Transcription factor FapR (198 aa).

The region spanning 102-168 is the MaoC-like domain; it reads TRIARGHHLF…GRTVVDVNSY (67 aa).

The protein belongs to the FapR family.

In terms of biological role, transcriptional factor involved in regulation of membrane lipid biosynthesis by repressing genes involved in fatty acid and phospholipid metabolism. This Geobacillus thermodenitrificans (strain NG80-2) protein is Transcription factor FapR.